We begin with the raw amino-acid sequence, 101 residues long: Apolipoprotein C-II (101 aa).

Positions 1-22 (MGTRFLLALFLVLLVLGFEVQG) are cleaved as a signal peptide. The tract at residues 66 to 74 (AVDEKLRDM) is lipid binding. The tract at residues 78 to 101 (STAAVSTYAGIFTDQVLSMLRGEE) is lipoprotein lipase cofactor.

The protein belongs to the apolipoprotein C2 family. In terms of processing, proapolipoprotein C-II is synthesized as a sialic acid containing glycoprotein which is subsequently desialylated prior to its proteolytic processing. Proapolipoprotein C-II, the major form found in plasma undergoes proteolytic cleavage of its N-terminal hexapeptide to generate apolipoprotein C-II, which occurs as the minor form in plasma.

The protein localises to the secreted. In terms of biological role, component of chylomicrons, very low-density lipoproteins (VLDL), low-density lipoproteins (LDL), and high-density lipoproteins (HDL) in plasma. Plays an important role in lipoprotein metabolism as an activator of lipoprotein lipase. Both proapolipoprotein C-II and apolipoprotein C-II can activate lipoprotein lipase. This Saimiri boliviensis boliviensis (Bolivian squirrel monkey) protein is Apolipoprotein C-II (APOC2).